A 75-amino-acid polypeptide reads, in one-letter code: UPF0235 protein Ava_3894 (75 aa).

The tract at residues 1–32 is disordered; the sequence is MQKKVKVKPNSKQQKIAEQDDGSLTVHLKSPP.

The protein belongs to the UPF0235 family.

This Trichormus variabilis (strain ATCC 29413 / PCC 7937) (Anabaena variabilis) protein is UPF0235 protein Ava_3894.